The sequence spans 343 residues: Phosphate acyltransferase (343 aa).

Belongs to the PlsX family. As to quaternary structure, homodimer. Probably interacts with PlsY.

It localises to the cytoplasm. The enzyme catalyses a fatty acyl-[ACP] + phosphate = an acyl phosphate + holo-[ACP]. It functions in the pathway lipid metabolism; phospholipid metabolism. Its function is as follows. Catalyzes the reversible formation of acyl-phosphate (acyl-PO(4)) from acyl-[acyl-carrier-protein] (acyl-ACP). This enzyme utilizes acyl-ACP as fatty acyl donor, but not acyl-CoA. This Neorickettsia sennetsu (strain ATCC VR-367 / Miyayama) (Ehrlichia sennetsu) protein is Phosphate acyltransferase.